The primary structure comprises 269 residues: uncharacterized protein (269 aa).

ATP contacts are provided by residues Gly12–Ser19 and Gly130–Ser137.

It to M.jannaschii MJ0578.

This is an uncharacterized protein from Methanocaldococcus jannaschii (strain ATCC 43067 / DSM 2661 / JAL-1 / JCM 10045 / NBRC 100440) (Methanococcus jannaschii).